The primary structure comprises 1387 residues: Collagen-like protein 6 (1387 aa).

N-linked (GlcNAc...) asparagine; by host glycosylation occurs at N6. Collagen-like domains lie at 95–154 (GNNG…KGDI), 161–220 (GDKG…KGDN), 266–325 (GEKG…KGEM), 344–403 (GSKG…KGEK), 450–508 (IKGD…KGDI), and 512–751 (GEKG…SGSS). Disordered stretches follow at residues 98 to 219 (GNNG…DKGD), 268 to 422 (KGEI…QNQG), and 454 to 753 (KGEK…SSCQ). Basic and acidic residues-rich tracts occupy residues 114-181 (IKGD…KGSK), 189-199 (SKGDNGDKGSK), 207-219 (SKGD…DKGD), 268-340 (KGEI…DGIK), 364-382 (KGDR…KGDN), 390-405 (SKGD…EKGE), 454-535 (KGEK…KGDI), and 544-747 (KGEK…DKGE). 15 N-linked (GlcNAc...) asparagine; by host glycosylation sites follow: N794, N814, N819, N826, N846, N886, N894, N969, N1032, N1077, N1123, N1200, N1224, N1232, and N1233.

May be hydroxylated on lysine by the viral-encoded procollagen-lysine,2-oxoglutarate 5-dioxygenase.

Its subcellular location is the virion. In terms of biological role, may participate in the formation of a layer of cross-linked glycosylated fibrils at the viral surface thus giving it a hairy-like appearance. This chain is Collagen-like protein 6, found in Acanthamoeba polyphaga mimivirus (APMV).